We begin with the raw amino-acid sequence, 699 residues long: Elongation factor G (699 aa).

Residues 8–288 (EDYRNFGIMA…AVVDYLPSPV (281 aa)) form the tr-type G domain. Residues 17 to 24 (AHIDAGKT), 86 to 90 (DTPGH), and 140 to 143 (NKMD) each bind GTP.

It belongs to the TRAFAC class translation factor GTPase superfamily. Classic translation factor GTPase family. EF-G/EF-2 subfamily.

The protein localises to the cytoplasm. In terms of biological role, catalyzes the GTP-dependent ribosomal translocation step during translation elongation. During this step, the ribosome changes from the pre-translocational (PRE) to the post-translocational (POST) state as the newly formed A-site-bound peptidyl-tRNA and P-site-bound deacylated tRNA move to the P and E sites, respectively. Catalyzes the coordinated movement of the two tRNA molecules, the mRNA and conformational changes in the ribosome. This Sinorhizobium medicae (strain WSM419) (Ensifer medicae) protein is Elongation factor G.